The following is a 266-amino-acid chain: Heat-inducible transcription repressor HrcA (266 aa).

This sequence belongs to the HrcA family.

Negative regulator of class I heat shock genes (grpE-dnaK-dnaJ and groELS operons). Prevents heat-shock induction of these operons. The polypeptide is Heat-inducible transcription repressor HrcA (Helicobacter pylori (strain J99 / ATCC 700824) (Campylobacter pylori J99)).